The primary structure comprises 213 residues: Thiamine import ATP-binding protein ThiQ (213 aa).

The ABC transporter domain maps to 1-212 (MIELNVTFDY…EQGRIVADQL (212 aa)). Residue 31 to 38 (GESGAGKS) participates in ATP binding.

This sequence belongs to the ABC transporter superfamily. Thiamine importer (TC 3.A.1.19.1) family. The complex is composed of two ATP-binding proteins (ThiQ), two transmembrane proteins (ThiP) and a solute-binding protein (ThiB).

It localises to the cell inner membrane. It catalyses the reaction thiamine(out) + ATP + H2O = thiamine(in) + ADP + phosphate + H(+). Part of the ABC transporter complex ThiBPQ involved in thiamine import. Responsible for energy coupling to the transport system. The polypeptide is Thiamine import ATP-binding protein ThiQ (Haemophilus ducreyi (strain 35000HP / ATCC 700724)).